Reading from the N-terminus, the 121-residue chain is Large ribosomal subunit protein uL22 (121 aa).

This sequence belongs to the universal ribosomal protein uL22 family. In terms of assembly, part of the 50S ribosomal subunit.

Functionally, this protein binds specifically to 23S rRNA; its binding is stimulated by other ribosomal proteins, e.g. L4, L17, and L20. It is important during the early stages of 50S assembly. It makes multiple contacts with different domains of the 23S rRNA in the assembled 50S subunit and ribosome. Its function is as follows. The globular domain of the protein is located near the polypeptide exit tunnel on the outside of the subunit, while an extended beta-hairpin is found that lines the wall of the exit tunnel in the center of the 70S ribosome. This Kocuria rhizophila (strain ATCC 9341 / DSM 348 / NBRC 103217 / DC2201) protein is Large ribosomal subunit protein uL22.